We begin with the raw amino-acid sequence, 500 residues long: Vitamin D(3) 25-hydroxylase (500 aa).

Residue Cys446 participates in heme binding.

The protein belongs to the cytochrome P450 family. Heme serves as cofactor. Found in liver and kidney.

It is found in the endoplasmic reticulum membrane. Its subcellular location is the microsome membrane. The enzyme catalyses calciol + reduced [NADPH--hemoprotein reductase] + O2 = calcidiol + oxidized [NADPH--hemoprotein reductase] + H2O + H(+). It carries out the reaction alfacalcidol + reduced [NADPH--hemoprotein reductase] + O2 = calcitriol + oxidized [NADPH--hemoprotein reductase] + H2O + H(+). It catalyses the reaction dodecanoate + reduced [NADPH--hemoprotein reductase] + O2 = 12-hydroxydodecanoate + oxidized [NADPH--hemoprotein reductase] + H2O + H(+). The catalysed reaction is dodecanoate + reduced [NADPH--hemoprotein reductase] + O2 = 11-hydroxydodecanoate + oxidized [NADPH--hemoprotein reductase] + H2O + H(+). The enzyme catalyses 5beta-cholestane-3alpha,7alpha-diol + reduced [NADPH--hemoprotein reductase] + O2 = 5beta-cholestane-3alpha,7alpha,25-triol + oxidized [NADPH--hemoprotein reductase] + H2O + H(+). It carries out the reaction 5beta-cholestane-3alpha,7alpha,12alpha-triol + reduced [NADPH--hemoprotein reductase] + O2 = 5beta-cholestane-3alpha,7alpha,12alpha,25-tetrol + oxidized [NADPH--hemoprotein reductase] + H2O + H(+). Catalyzes the 25-hydroxylation of vitamin D(3) (calciol), 1alpha-hydroxyvitamin D(3) (alphacalcidiol) and some C27 steroids. In addition the enzyme catalyzes the hydroxylation of positions 11 and 12 of dodecanoate. The polypeptide is Vitamin D(3) 25-hydroxylase (CYP2D25) (Sus scrofa (Pig)).